The following is a 346-amino-acid chain: MKAARWHNQKDIRIEHIEEPKTEPGKVKIKVKWCGICGSDLHEYLGGPIFIPVDKPHPLTNETAPVTMGHEFSGEVVEVGEGVENYKVGDRVVVEPIFATHGHQGAYNLDEQMGFLGLAGGGGGFSEYVSVDEELLFKLPDELSYEQGALVEPSAVALYAVRSSKLKAGDKAAVFGCGPIGLLVIEALKAAGATDIYAVELSPERQQKAEELGAIIVDPSKTDDVVAEIAERTGGGVDVAFEVTGVPVVLRQAIQSTTIAGETVIVSIWEKGAEIHPNDIVIKERTVKGIIGYRDIFPAVLSLMKEGYFSADKLVTKKIVLDDLIEEGFGALIKEKSQVKILVRPN.

Zn(2+)-binding residues include cysteine 37, histidine 70, and glutamate 152.

It belongs to the zinc-containing alcohol dehydrogenase family. As to quaternary structure, homotetramer. Interacts with BrxC. The cofactor is Zn(2+).

The protein localises to the cytoplasm. Its subcellular location is the secreted. The catalysed reaction is (R,R)-butane-2,3-diol + NAD(+) = (R)-acetoin + NADH + H(+). This Bacillus subtilis (strain 168) protein is (R,R)-butanediol dehydrogenase.